Reading from the N-terminus, the 557-residue chain is Potassium-transporting ATPase potassium-binding subunit (557 aa).

Transmembrane regions (helical) follow at residues 6–26, 59–79, 127–147, 172–192, 247–267, 278–298, 363–383, 410–430, 475–495, and 520–540; these read IQLL…GLGL, ALSL…ILFF, AGLT…LLAL, LYVL…FGVV, ISNF…VFLY, WAIF…VWTF, IVFG…LLTV, ILGI…SVSV, VMIA…VLVI, and FYIL…FPVL.

It belongs to the KdpA family. In terms of assembly, the system is composed of three essential subunits: KdpA, KdpB and KdpC.

The protein localises to the cell inner membrane. Functionally, part of the high-affinity ATP-driven potassium transport (or Kdp) system, which catalyzes the hydrolysis of ATP coupled with the electrogenic transport of potassium into the cytoplasm. This subunit binds the periplasmic potassium ions and delivers the ions to the membrane domain of KdpB through an intramembrane tunnel. The chain is Potassium-transporting ATPase potassium-binding subunit from Leptospira interrogans serogroup Icterohaemorrhagiae serovar copenhageni (strain Fiocruz L1-130).